Consider the following 211-residue polypeptide: MRLTAKQVTWLKVSLHLAGLLPFLWLVWAINHGGLGADPVKDIQHFTGRTALKFLLATLLITPLARYAKQPLLIRTRRLLGLWCFAWATLHLTSYALLELGVNNLALLGKELITRPYLTLGIISWVILLALAFTSTQAMQRKLGKHWQQLHNFVYLVAILAPIHYLWSVKIISPQPLIYAGLAVLLLALRYKKLRSLFKRLRKQVHNKLSV.

Helical transmembrane passes span 17-37 (LAGL…GLGA), 82-102 (LWCF…ELGV), 116-136 (PYLT…FTST), and 153-173 (FVYL…KIIS).

The protein belongs to the MsrQ family. As to quaternary structure, heterodimer of a catalytic subunit (MsrP) and a heme-binding subunit (MsrQ). Requires FMN as cofactor. It depends on heme b as a cofactor.

Its subcellular location is the cell inner membrane. Its function is as follows. Part of the MsrPQ system that repairs oxidized periplasmic proteins containing methionine sulfoxide residues (Met-O), using respiratory chain electrons. Thus protects these proteins from oxidative-stress damage caused by reactive species of oxygen and chlorine generated by the host defense mechanisms. MsrPQ is essential for the maintenance of envelope integrity under bleach stress, rescuing a wide series of structurally unrelated periplasmic proteins from methionine oxidation, including the primary periplasmic chaperone SurA and the lipoprotein Pal. MsrQ provides electrons for reduction to the reductase catalytic subunit MsrP, using the quinone pool of the respiratory chain. The polypeptide is Protein-methionine-sulfoxide reductase heme-binding subunit MsrQ (Shigella sonnei (strain Ss046)).